Consider the following 293-residue polypeptide: Hydroxyquinol 1,2-dioxygenase (293 aa).

Fe cation-binding residues include tyrosine 164, tyrosine 197, histidine 221, and histidine 223.

Belongs to the intradiol ring-cleavage dioxygenase family. Homodimer. Requires Fe(3+) as cofactor.

It catalyses the reaction benzene-1,2,4-triol + O2 = maleylacetate + 2 H(+). It participates in aromatic compound metabolism; beta-ketoadipate pathway; 3-oxoadipate from 3,4-dihydroxybenzoate: step 2/4. With respect to regulation, inhibited by 3,5-dichlorocatechol, chlorohydroquinone and 4,5-dibromocatechol. Functionally, catalyzes the ortho-cleavage of the aromatic ring of hydroxyquinol. The polypeptide is Hydroxyquinol 1,2-dioxygenase (chqB) (Nocardioides simplex (Arthrobacter simplex)).